Here is a 496-residue protein sequence, read N- to C-terminus: E1B 55 kDa protein (496 aa).

A disordered region spans residues 1–74 (MERRNPSERG…EPESRPGPSG (74 aa)). Positions 45 to 61 (GGAAAAAGGSQAAAAGA) are enriched in low complexity. A phosphoserine mark is found at Ser490 and Ser491. A Phosphothreonine modification is found at Thr495.

Belongs to the adenoviridae E1B 55 kDa protein family. In terms of assembly, interacts with host PML-4 and PML-5; this interaction promotes efficient subnuclear targeting of E1B-55K to PML nuclear bodies. Interacts with E4-ORF3 protein. Interacts with E4-ORF6 protein. Post-translationally, phosphorylation at the C-terminus affects the subcellular location.

The protein localises to the host nucleus. It is found in the host cytoplasm. In terms of biological role, plays a major role to prevent cellular inhibition of viral genome replication. Assembles an SCF-like E3 ubiquitin ligase complex based on the cellular proteins ELOB, ELOC, CUL5 and RBX1, in cooperation with viral E4orf6. This viral RING-type ligase ubiquitinates cellular substrates and targets them to proteasomal degradation: TP53/p53, LIG4, MRE11-RAD50-NBS1 (MRN) complex, ITGA3, DAXX and BLM. E1B-55K probably acts as the substrate-specific adapter of the SCF-like E3 ubiquitin ligase complex. Degradation of host TP53/p53 activity is essential for preventing E1A-induced TP53 accumulation that would otherwise lead to cell apoptosis and growth arrest. E1B-55K also inactivates TP53 transcription-factor activity by binding its transactivation domain. E1B-55K also functions as a SUMO1 E3 ligase for TP53 which causes the latter to be sequestered in promyelocytic leukemia (PML) nuclear bodies thereby contributing to maximal inhibition of TP53 function. This Homo sapiens (Human) protein is E1B 55 kDa protein.